Here is a 196-residue protein sequence, read N- to C-terminus: PRADC1-like protein (196 aa).

Positions 1–18 (MLIAWLVLAATLSRSIRA) are cleaved as a signal peptide. Residues 73-171 (ITDPPGACQE…STLQRLKRVH (99 aa)) enclose the PA domain. N-linked (GlcNAc...) asparagine glycosylation occurs at Asn179.

The protein resides in the secreted. May be involved in iversification of muscle cell fates. The sequence is that of PRADC1-like protein from Drosophila melanogaster (Fruit fly).